Consider the following 135-residue polypeptide: Thyrostimulin beta-5 subunit (135 aa).

A signal peptide spans 1-19 (MVMPLVLSLALTPPPLCHA). 5 cysteine pairs are disulfide-bonded: Cys30–Cys87, Cys54–Cys102, Cys63–Cys118, Cys67–Cys120, and Cys123–Cys130.

It belongs to the glycoprotein hormones subunit beta family. As to quaternary structure, heterodimer with GPHA2; non-covalently-linked. In terms of tissue distribution, expressed by the venom duct.

It localises to the secreted. In Conus victoriae (Queen Victoria cone), this protein is Thyrostimulin beta-5 subunit.